Reading from the N-terminus, the 253-residue chain is MALSMPLNGLKEEDKEPLIELFVKAGSDGESIGNCPFSQRLFMILWLKGVVFSVTTVDLKRKPADLQNLAPGTHPPFITFNSEVKTDVNKIEEFLEEVLCPPKYLKLSPKHPESNTAGMDIFAKFSAYIKNSRPEANEALERGLLKTLQKLDEYLNSPLPDEIDENSMEDIKFSTRKFLDGNEMTLADCNLLPKLHIVKVVAKKYRNFDIPKEMTGIWRYLTNAYSRDEFTNTCPSDKEVEIAYSDVAKRLTK.

Residue alanine 2 is modified to N-acetylalanine. The tract at residues 2–101 (ALSMPLNGLK…EEFLEEVLCP (100 aa)) is required for insertion into the membrane. Serine 4 carries the phosphoserine modification. Lysine 24 is modified (N6-acetyllysine). The G-site signature appears at 35-38 (CPFS). The chain crosses the membrane as a helical span at residues 37 to 57 (FSQRLFMILWLKGVVFSVTTV). Positions 81–244 (NSEVKTDVNK…PSDKEVEIAY (164 aa)) constitute a GST C-terminal domain. Position 130 is an N6-acetyllysine (lysine 130). Residues serine 132, serine 167, and serine 236 each carry the phosphoserine modification. The residue at position 244 (tyrosine 244) is a Phosphotyrosine.

It belongs to the chloride channel CLIC family. Component of a multimeric complex consisting of several cytoskeletal proteins, including actin, ezrin, alpha-actinin, gelsolin, IQGAP1 and CLIC5A. Binds directly to brain dynamin I in a complex containing actin, tubulin and 14-3-3 isoforms. Monomer. Interacts with HRH3. Interacts with AKAP9. As to expression, detected in epithelial cells from colon, esophagus and kidney (at protein level). Expression is prominent in heart, kidney, placenta and skeletal muscle.

The protein localises to the cytoplasm. It localises to the cytoskeleton. The protein resides in the microtubule organizing center. Its subcellular location is the centrosome. It is found in the cytoplasmic vesicle membrane. The protein localises to the nucleus. It localises to the cell membrane. The protein resides in the mitochondrion. Its subcellular location is the cell junction. It is found in the endoplasmic reticulum membrane. It carries out the reaction chloride(in) = chloride(out). The catalysed reaction is thiocyanate(in) = thiocyanate(out). The enzyme catalyses nitrate(in) = nitrate(out). It catalyses the reaction iodide(out) = iodide(in). It carries out the reaction bromide(in) = bromide(out). The catalysed reaction is fluoride(in) = fluoride(out). The enzyme catalyses choline(out) = choline(in). Inhibited by rapamycin, amphotericin B and IAA-94. In the soluble state, catalyzes glutaredoxin-like thiol disulfide exchange reactions with reduced glutathione as electron donor. Can insert into membranes and form voltage-dependent multi-ion conductive channels. Membrane insertion seems to be redox-regulated and may occur only under oxidizing conditions. Has alternate cellular functions like a potential role in angiogenesis or in maintaining apical-basolateral membrane polarity during mitosis and cytokinesis. Could also promote endothelial cell proliferation and regulate endothelial morphogenesis (tubulogenesis). Promotes cell-surface expression of HRH3. This chain is Chloride intracellular channel protein 4, found in Homo sapiens (Human).